Consider the following 259-residue polypeptide: Deoxyribose-phosphate aldolase (259 aa).

The Proton donor/acceptor role is filled by D102. K167 (schiff-base intermediate with acetaldehyde) is an active-site residue. K201 (proton donor/acceptor) is an active-site residue.

Belongs to the DeoC/FbaB aldolase family. DeoC type 2 subfamily.

The protein resides in the cytoplasm. It carries out the reaction 2-deoxy-D-ribose 5-phosphate = D-glyceraldehyde 3-phosphate + acetaldehyde. Its pathway is carbohydrate degradation; 2-deoxy-D-ribose 1-phosphate degradation; D-glyceraldehyde 3-phosphate and acetaldehyde from 2-deoxy-alpha-D-ribose 1-phosphate: step 2/2. Catalyzes a reversible aldol reaction between acetaldehyde and D-glyceraldehyde 3-phosphate to generate 2-deoxy-D-ribose 5-phosphate. The polypeptide is Deoxyribose-phosphate aldolase (Escherichia coli O1:K1 / APEC).